Here is a 440-residue protein sequence, read N- to C-terminus: Histidinol dehydrogenase (440 aa).

NAD(+) is bound by residues Y136, Q197, and N220. Positions 243, 265, and 268 each coordinate substrate. Positions 265 and 268 each coordinate Zn(2+). Active-site proton acceptor residues include E333 and H334. Substrate contacts are provided by H334, D367, E421, and H426. D367 serves as a coordination point for Zn(2+). H426 contributes to the Zn(2+) binding site.

Belongs to the histidinol dehydrogenase family. The cofactor is Zn(2+).

The enzyme catalyses L-histidinol + 2 NAD(+) + H2O = L-histidine + 2 NADH + 3 H(+). It participates in amino-acid biosynthesis; L-histidine biosynthesis; L-histidine from 5-phospho-alpha-D-ribose 1-diphosphate: step 9/9. Functionally, catalyzes the sequential NAD-dependent oxidations of L-histidinol to L-histidinaldehyde and then to L-histidine. This Pseudomonas aeruginosa (strain ATCC 15692 / DSM 22644 / CIP 104116 / JCM 14847 / LMG 12228 / 1C / PRS 101 / PAO1) protein is Histidinol dehydrogenase.